A 479-amino-acid chain; its full sequence is Protein phosphatase 1B (479 aa).

Residues 1–14 (MGAFLDKPKTEKHN) show a composition bias toward basic and acidic residues. The interval 1–20 (MGAFLDKPKTEKHNAHGAGN) is disordered. Glycine 2 is lipidated: N-myristoyl glycine. A Glycyl lysine isopeptide (Lys-Gly) (interchain with G-Cter in ISG15) cross-link involves residue lysine 12. Residues 23-295 (RYGLSSMQGW…DNMSIVLVCF (273 aa)) enclose the PPM-type phosphatase domain. Positions 60 and 61 each coordinate Mn(2+). Residue lysine 142 forms a Glycyl lysine isopeptide (Lys-Gly) (interchain with G-Cter in ISG15) linkage. Mn(2+) is bound by residues aspartate 243 and aspartate 286. Serine 386 is subject to Phosphoserine. Residues 423–479 (VEGEESPAEPAATATSSNSDAGNPVTMQESHTESESGLAELDSSNEDAGTKMSGEKI) form a disordered region. Residues 430–439 (AEPAATATSS) are compositionally biased toward low complexity. The span at 440 to 451 (NSDAGNPVTMQE) shows a compositional bias: polar residues.

This sequence belongs to the PP2C family. As to quaternary structure, monomer. Interacts with PAK6. Interacts with the phosphorylated form of IKBKB/IKKB. Mg(2+) serves as cofactor. Mn(2+) is required as a cofactor. Post-translationally, isgylation negatively regulates its activity. In terms of processing, N-myristoylation is essential for the recognition of its substrates for dephosphorylation. As to expression, highly expressed in heart and skeletal muscle.

The protein resides in the cytoplasm. Its subcellular location is the cytosol. It is found in the membrane. The enzyme catalyses O-phospho-L-seryl-[protein] + H2O = L-seryl-[protein] + phosphate. It carries out the reaction O-phospho-L-threonyl-[protein] + H2O = L-threonyl-[protein] + phosphate. Functionally, enzyme with a broad specificity. Dephosphorylates CDK2 and CDK6 in vitro. Dephosphorylates PRKAA1 and PRKAA2. Inhibits TBK1-mediated antiviral signaling by dephosphorylating it at 'Ser-172'. Plays an important role in the termination of TNF-alpha-mediated NF-kappa-B activation through dephosphorylating and inactivating IKBKB/IKKB. The protein is Protein phosphatase 1B (PPM1B) of Homo sapiens (Human).